We begin with the raw amino-acid sequence, 169 residues long: Large ribosomal subunit protein bL17 (169 aa).

The segment at 124–169 (EKAVKRQDRSRRVKGSKKAIDEKTSDDSASVEAAPAAPEAEEKKDA) is disordered. Over residues 131-140 (DRSRRVKGSK) the composition is skewed to basic residues. The span at 150–161 (DSASVEAAPAAP) shows a compositional bias: low complexity.

Belongs to the bacterial ribosomal protein bL17 family. Part of the 50S ribosomal subunit. Contacts protein L32.

This is Large ribosomal subunit protein bL17 from Chloroherpeton thalassium (strain ATCC 35110 / GB-78).